A 292-amino-acid polypeptide reads, in one-letter code: tRNA(Ile)-lysidine synthase (292 aa).

32–37 is a binding site for ATP; it reads SGGADS.

This sequence belongs to the tRNA(Ile)-lysidine synthase family.

Its subcellular location is the cytoplasm. The enzyme catalyses cytidine(34) in tRNA(Ile2) + L-lysine + ATP = lysidine(34) in tRNA(Ile2) + AMP + diphosphate + H(+). In terms of biological role, ligates lysine onto the cytidine present at position 34 of the AUA codon-specific tRNA(Ile) that contains the anticodon CAU, in an ATP-dependent manner. Cytidine is converted to lysidine, thus changing the amino acid specificity of the tRNA from methionine to isoleucine. The sequence is that of tRNA(Ile)-lysidine synthase from Corynebacterium diphtheriae (strain ATCC 700971 / NCTC 13129 / Biotype gravis).